Reading from the N-terminus, the 99-residue chain is Plastocyanin (99 aa).

Residues 1–99 (IEVLLGSDDG…AGMVGKVTVN (99 aa)) enclose the Plastocyanin-like domain. Cu cation-binding residues include His37, Cys84, His87, and Met92.

Belongs to the plastocyanin family. The cofactor is Cu(2+).

The protein resides in the plastid. Its subcellular location is the chloroplast thylakoid membrane. Participates in electron transfer between P700 and the cytochrome b6-f complex in photosystem I. This Solanum crispum (Chilean potato-tree) protein is Plastocyanin (PETE).